The chain runs to 475 residues: MLPILKNQGVKKDQNHIALKNDSCESSSPCFDHEGNKINFISLGCPRNLVDSEVMLGILLKAGYEVAPTLEEADYLVINTCGFLEASRQESMDTVEEVLSQRKKTAKLIVTGCMVQTHSDALKTTFPSIDYLLGSGDVEGILKAVQSTQKGQIISSARSYLEAGEVPRRLSTPKHYAYLKIAEGCRKRCAYCVIPTIKGPLKSKGKEQILKEFNLLLSQGVKEVILIAQDLGDYGKDQGAKKLTALLNLLQSMLEIKQAFWLRLLYLYPDEITDELIALMKSDSRICPYLDMPIQHVNNQILKSMRRATSKEDIIEIITKLRREIPNVAIRTSLIVGFPGETEEQFQELIQFVQDYPLENVGIFKFSREPGSHAYDLPNQISDEMKEDRYHRLMQVQKKVVKKNLKKMIGKKIAVVVEGYHPETELLMIGRHTGQCPDIDGQVLINDGRKVKAFGEIYTVEITDVADYDLVGHVI.

An MTTase N-terminal domain is found at 36–150 (NKINFISLGC…ILKAVQSTQK (115 aa)). [4Fe-4S] cluster is bound by residues Cys45, Cys81, Cys113, Cys185, Cys189, and Cys192. Residues 171 to 403 (STPKHYAYLK…MQVQKKVVKK (233 aa)) form the Radical SAM core domain. The TRAM domain maps to 406–475 (KKMIGKKIAV…ADYDLVGHVI (70 aa)).

The protein belongs to the methylthiotransferase family. RimO subfamily. It depends on [4Fe-4S] cluster as a cofactor.

It localises to the cytoplasm. The enzyme catalyses L-aspartate(89)-[ribosomal protein uS12]-hydrogen + (sulfur carrier)-SH + AH2 + 2 S-adenosyl-L-methionine = 3-methylsulfanyl-L-aspartate(89)-[ribosomal protein uS12]-hydrogen + (sulfur carrier)-H + 5'-deoxyadenosine + L-methionine + A + S-adenosyl-L-homocysteine + 2 H(+). In terms of biological role, catalyzes the methylthiolation of an aspartic acid residue of ribosomal protein uS12. The polypeptide is Ribosomal protein uS12 methylthiotransferase RimO (Protochlamydia amoebophila (strain UWE25)).